Reading from the N-terminus, the 248-residue chain is Probable transcriptional regulatory protein M446_6579 (248 aa).

The protein belongs to the TACO1 family.

Its subcellular location is the cytoplasm. This chain is Probable transcriptional regulatory protein M446_6579, found in Methylobacterium sp. (strain 4-46).